We begin with the raw amino-acid sequence, 571 residues long: MTLLSSLGRASRSAPLASKLLLLGTLSGGSIVAYADANEEANKKEEHKKKKVVVLGTGWAGISFLKDLDITSYDVQVVSPQNYFAFTPLLPSVTCGTVEARSIVESVRNITKKKNGEIELWEADCFKIDHVNQKVHCRPVFKDDPEASQEFSLGYDYLIVAVGAQVNTFGTPGVLENCHFLKEVEDAQRIRRGVIDCFEKAILPGLTEEQRRRKLHFVIVGGGPTGVEFAAELHDFIIEDITKIYPSVKELVKITLIQSGDHILNTFDERISSFAEQKFTRDGIDVQTGMRVMSVTDKDITVKVKSSGELVSIPHGLILWSTGVGTRPVISDFMEQVGQGGRRAVATNEWLQVTGCENVYAVGDCASIAQRKILGDIANIFKAADADNSGTLTMEELEGVVDDIIVRYPQVELYLKSKHMRHINDLLADSEGNARKEVDIEAFKLALSEADSQMKTLPATAQVAAQQGAYLAKCFNRMEQCKELPEGPKRFRTGGHHQFRPFQYKHFGQFAPLGGDQAAAELPGDWVSAGKSAQWLWYSVYASKQVSWRTRALVVSDWTRRYIFGRDSSRI.

A mitochondrion-targeting transit peptide spans 1–35 (MTLLSSLGRASRSAPLASKLLLLGTLSGGSIVAYA). Position 51-81 (51-81 (KVVVLGTGWAGISFLKDLDITSYDVQVVSPQ)) interacts with FAD. 215–251 (LHFVIVGGGPTGVEFAAELHDFIIEDITKIYPSVKEL) contributes to the NAD(+) binding site. Positions 372-407 (KILGDIANIFKAADADNSGTLTMEELEGVVDDIIVR) constitute an EF-hand domain. The Ca(2+) site is built by Asp385, Asp387, Ser389, Thr391, and Glu396. The Microbody targeting signal motif lies at 562-571 (YIFGRDSSRI).

It belongs to the NADH dehydrogenase family. FAD serves as cofactor. Expressed in seedlings, roots, cotyledons, leaves, stems, buds and flowers.

It is found in the mitochondrion inner membrane. The protein resides in the peroxisome. The enzyme catalyses a quinone + NADH + H(+) = a quinol + NAD(+). It carries out the reaction a ubiquinone + NADH + H(+) = a ubiquinol + NAD(+). Activity is calcium-dependent with a more pronounced effect at higher pH. Its function is as follows. Alternative NADH-ubiquinone oxidoreductase which catalyzes the oxidation of mitochondrial NADH does not translocate protons across the inner mitochondrial membrane. Calcium-dependent NAD(P)H dehydrogenase. Binds calcium ions. In Arabidopsis thaliana (Mouse-ear cress), this protein is External alternative NAD(P)H-ubiquinone oxidoreductase B1, mitochondrial (NDB1).